The primary structure comprises 643 residues: Threonine--tRNA ligase (643 aa).

The TGS domain occupies 1–61; sequence MIKITLKDGS…NEDSSLEICT (61 aa). A catalytic region spans residues 240 to 540; that stretch reads DHNKLGRELG…LIEKYAGALP (301 aa). Zn(2+) is bound by residues C335, H386, and H517.

The protein belongs to the class-II aminoacyl-tRNA synthetase family. In terms of assembly, homodimer. It depends on Zn(2+) as a cofactor.

The protein localises to the cytoplasm. It carries out the reaction tRNA(Thr) + L-threonine + ATP = L-threonyl-tRNA(Thr) + AMP + diphosphate + H(+). Functionally, catalyzes the attachment of threonine to tRNA(Thr) in a two-step reaction: L-threonine is first activated by ATP to form Thr-AMP and then transferred to the acceptor end of tRNA(Thr). Also edits incorrectly charged L-seryl-tRNA(Thr). In Clostridium perfringens (strain SM101 / Type A), this protein is Threonine--tRNA ligase.